Reading from the N-terminus, the 82-residue chain is Small ribosomal subunit protein bS16 (82 aa).

The protein belongs to the bacterial ribosomal protein bS16 family.

The chain is Small ribosomal subunit protein bS16 from Clostridium botulinum (strain ATCC 19397 / Type A).